Consider the following 111-residue polypeptide: Putative pterin-4-alpha-carbinolamine dehydratase (111 aa).

The protein belongs to the pterin-4-alpha-carbinolamine dehydratase family.

The catalysed reaction is (4aS,6R)-4a-hydroxy-L-erythro-5,6,7,8-tetrahydrobiopterin = (6R)-L-erythro-6,7-dihydrobiopterin + H2O. This Alkaliphilus metalliredigens (strain QYMF) protein is Putative pterin-4-alpha-carbinolamine dehydratase.